Consider the following 135-residue polypeptide: uncharacterized protein (135 aa).

The Response regulatory domain occupies 13–129 (QVLIAENSRF…KILEKVNAAI (117 aa)). At D64 the chain carries 4-aspartylphosphate.

This is an uncharacterized protein from Leptospira interrogans serogroup Icterohaemorrhagiae serovar copenhageni (strain Fiocruz L1-130).